The sequence spans 890 residues: Translation initiation factor IF-2 (890 aa).

The disordered stretch occupies residues 110 to 216 (ISKPISKAPQ…KKPLIKTQDH (107 aa)). A compositionally biased stretch (basic residues) spans 135–148 (VPKRKGLVIIKKKR). Over residues 184–199 (KSYNEPKNKENDDIKK) the composition is skewed to basic and acidic residues. The segment covering 200-210 (QKVKKEKKKPL) has biased composition (basic residues). In terms of domain architecture, tr-type G spans 387–554 (TRPPVVTIMG…NILLQAEILE (168 aa)). Residues 396 to 403 (GHVDHGKT) form a G1 region. 396–403 (GHVDHGKT) contacts GTP. A G2 region spans residues 421–425 (GITQH). The segment at 442–445 (DTPG) is G3. Residues 442–446 (DTPGH) and 496–499 (NKMD) each bind GTP. The interval 496 to 499 (NKMD) is G4. The segment at 532–534 (SAR) is G5.

Belongs to the TRAFAC class translation factor GTPase superfamily. Classic translation factor GTPase family. IF-2 subfamily.

It localises to the cytoplasm. Its function is as follows. One of the essential components for the initiation of protein synthesis. Protects formylmethionyl-tRNA from spontaneous hydrolysis and promotes its binding to the 30S ribosomal subunits. Also involved in the hydrolysis of GTP during the formation of the 70S ribosomal complex. The protein is Translation initiation factor IF-2 of Aliarcobacter butzleri (strain RM4018) (Arcobacter butzleri).